The chain runs to 644 residues: uncharacterized protein (644 aa).

254 to 261 (GKMGAGKS) is an ATP binding site.

This is an uncharacterized protein from Bacillus anthracis.